We begin with the raw amino-acid sequence, 363 residues long: Putative serine/threonine-protein kinase gskl-1 (363 aa).

The region spanning 20–304 is the Protein kinase domain; the sequence is FGAHKLCGSG…AIDVLKMPLF (285 aa). ATP is bound by residues 26-34 and Lys50; that span reads CGSGRFSNV. Asp146 functions as the Proton acceptor in the catalytic mechanism. The interval 311 to 363 is disordered; that stretch reads PPKKRSNGVEMPNLASYTEMHHKREPETEVVADIQTTEKAEKESDSTNEELED. Over residues 346–355 the composition is skewed to basic and acidic residues; it reads TTEKAEKESD.

The protein belongs to the protein kinase superfamily. Ser/Thr protein kinase family. In terms of tissue distribution, expressed during multiple stages of spermatogenesis, in males and hermaphrodites (at protein level).

The protein localises to the cytoplasm. The protein resides in the cell projection. It is found in the pseudopodium. It catalyses the reaction L-seryl-[protein] + ATP = O-phospho-L-seryl-[protein] + ADP + H(+). The enzyme catalyses L-threonyl-[protein] + ATP = O-phospho-L-threonyl-[protein] + ADP + H(+). May be an autophosphorylating tyrosine kinase, a bifunctional (serine/tyrosine-specific) protein kinase, or a serine kinase that is a substrate for an associated tyrosine kinase. Acting in concert with putative serine/threonine-protein kinase gskl-2, required for sister chromatid segregation and spermatid budding during male meiosis. Plays a role in regulating female meiosis II, together with gskl-2. Involved in sperm pseudopod formation and function, together with gskl-2. The polypeptide is Putative serine/threonine-protein kinase gskl-1 (Caenorhabditis elegans).